The sequence spans 139 residues: MSNSASGMAVCDECKLKFLELKAKRSFRFIVFKINEKVQQVVVDRLGQPGESYDDFTACLPADECRYAVFDFDFVTDENCQKSKIFFISWAPDTSRVRSKMLYASSKDRFKRELDGIQVELQATDPSEMSMDIVKSRAL.

One can recognise an ADF-H domain in the interval 5 to 139 (ASGMAVCDEC…SMDIVKSRAL (135 aa)).

The protein belongs to the actin-binding proteins ADF family.

Actin-depolymerizing protein. Severs actin filaments (F-actin) and binds to actin monomers. The chain is Actin-depolymerizing factor 1 (ADF1) from Oryza sativa subsp. japonica (Rice).